The chain runs to 115 residues: Phosphorelay protein LuxU (115 aa).

The HPt domain maps to 17-107 (GADNVPVLLE…DRLHQTQQAY (91 aa)). Residue H56 is modified to Phosphohistidine.

As to quaternary structure, monomer.

Its function is as follows. Phosphorelay protein which receives a sensory signal from a sensor kinase and transmit it to LuxO. At low cell density, a phosphoryl group is transferred from the sensor kinase, probably on His-56 and this phosphoryl group is further transferred to LuxO. The polypeptide is Phosphorelay protein LuxU (luxU) (Vibrio vulnificus (strain CMCP6)).